Reading from the N-terminus, the 216-residue chain is Ribosomal RNA large subunit methyltransferase E (216 aa).

S-adenosyl-L-methionine-binding residues include Gly-67, Trp-69, Asp-87, Asp-103, and Asp-128. Lys-168 serves as the catalytic Proton acceptor.

Belongs to the class I-like SAM-binding methyltransferase superfamily. RNA methyltransferase RlmE family.

It is found in the cytoplasm. It catalyses the reaction uridine(2552) in 23S rRNA + S-adenosyl-L-methionine = 2'-O-methyluridine(2552) in 23S rRNA + S-adenosyl-L-homocysteine + H(+). Functionally, specifically methylates the uridine in position 2552 of 23S rRNA at the 2'-O position of the ribose in the fully assembled 50S ribosomal subunit. This is Ribosomal RNA large subunit methyltransferase E from Acinetobacter baumannii (strain AB307-0294).